The following is a 373-amino-acid chain: MKLFFRFLTLVAVLAMSLADVAPAWALTSRIKDIASLQAGRDNQLIGYGLIVGLQGTGDGFRASPFTEQSMRAMLQNLGISTQGGQSNAKNTAAVMVTANLPPFASPGSRIDVTVSSLGDATSLRGGTLVMTSLSGADGQIYAVAQGAAIVTGFQAQGQAATVTEGVTTAGRVPGGAIIERELPSRFKDSVNLVLQLRNPDFSTAIRIADIVNGYASARFGGPVAEAKDSQEVVIQKPRTADLTRLMADIENLIVETDTPAKVVINERTGTIVIGSDVRVSPVAVSYGTLTVQVTETPQIIQPEPFSQGRTAVQPQTDIAAEQTGGRVAIIDGPDLRTLVAGLNNIGVKPDGIIAILQGIKSAGALQAELVLQ.

A signal peptide spans 1–26 (MKLFFRFLTLVAVLAMSLADVAPAWA).

It belongs to the FlgI family. The basal body constitutes a major portion of the flagellar organelle and consists of four rings (L,P,S, and M) mounted on a central rod.

It is found in the periplasm. Its subcellular location is the bacterial flagellum basal body. Its function is as follows. Assembles around the rod to form the L-ring and probably protects the motor/basal body from shearing forces during rotation. This is Flagellar P-ring protein from Rhizobium leguminosarum bv. trifolii (strain WSM2304).